We begin with the raw amino-acid sequence, 294 residues long: Ribosomal protein L11 methyltransferase (294 aa).

S-adenosyl-L-methionine is bound by residues threonine 144, glycine 165, aspartate 187, and asparagine 229.

It belongs to the methyltransferase superfamily. PrmA family.

Its subcellular location is the cytoplasm. It catalyses the reaction L-lysyl-[protein] + 3 S-adenosyl-L-methionine = N(6),N(6),N(6)-trimethyl-L-lysyl-[protein] + 3 S-adenosyl-L-homocysteine + 3 H(+). In terms of biological role, methylates ribosomal protein L11. The protein is Ribosomal protein L11 methyltransferase of Pseudomonas aeruginosa (strain LESB58).